A 315-amino-acid polypeptide reads, in one-letter code: Capsid protein (315 aa).

A disordered region spans residues methionine 1 to glutamate 60. A compositionally biased stretch (basic and acidic residues) spans threonine 29–glutamate 47.

Belongs to the potexviruses coat protein family.

Its subcellular location is the virion. Functionally, required for genome encapsidation. Forms ribonucleoprotein complexes along with TGB1 helicase and viral RNA. This is Capsid protein from Chrysanthemum morifolium (Florist's daisy).